Consider the following 86-residue polypeptide: Teretoxin Tsu6.16 (86 aa).

An N-terminal signal peptide occupies residues M1 to L21. Residues G22–N46 constitute a propeptide that is removed on maturation.

It belongs to the teretoxin M (TM) superfamily. Contains 3 disulfide bonds. As to expression, expressed by the venom duct.

The protein localises to the secreted. The polypeptide is Teretoxin Tsu6.16 (Terebra subulata (Chocolate spotted auger)).